The primary structure comprises 176 residues: Transcription termination/antitermination protein NusG (176 aa).

Residues 125–149 enclose the KOW domain; the sequence is GEVVRVVEGPFANFTATVEEYDVEH.

This sequence belongs to the NusG family.

Functionally, participates in transcription elongation, termination and antitermination. The protein is Transcription termination/antitermination protein NusG of Helicobacter pylori (strain J99 / ATCC 700824) (Campylobacter pylori J99).